We begin with the raw amino-acid sequence, 175 residues long: NADH-ubiquinone oxidoreductase chain 6 (175 aa).

5 helical membrane passes run 1-21 (MMTYFVFILSTVFVIGFVGFS), 27-47 (VYGGVGLIISGGVGCGIVMNF), 49-69 (GSFLGLMVFLIYLGGMMVVFG), 88-108 (VVLGAFVSGLFMEMLLVLYVL), and 149-169 (YGVWLVVVTGWSLFIAVVVIM).

Belongs to the complex I subunit 6 family. Core subunit of respiratory chain NADH dehydrogenase (Complex I) which is composed of 45 different subunits.

Its subcellular location is the mitochondrion inner membrane. It carries out the reaction a ubiquinone + NADH + 5 H(+)(in) = a ubiquinol + NAD(+) + 4 H(+)(out). Its function is as follows. Core subunit of the mitochondrial membrane respiratory chain NADH dehydrogenase (Complex I) which catalyzes electron transfer from NADH through the respiratory chain, using ubiquinone as an electron acceptor. Essential for the catalytic activity and assembly of complex I. The polypeptide is NADH-ubiquinone oxidoreductase chain 6 (MT-ND6) (Pteropus dasymallus (Ryukyu flying fox)).